The primary structure comprises 276 residues: Exosome complex component RRP43 (276 aa).

Alanine 2 carries the post-translational modification N-acetylalanine.

The protein belongs to the RNase PH family. Component of the RNA exosome core complex (Exo-9), composed of EXOSC1, EXOSC2, EXOSC3, EXOSC4, EXOSC5, EXOSC6, EXOSC7, EXOSC8 and EXOSC9; within the complex interacts with EXOSC5 and EXOSC6. The catalytically inactive RNA exosome core complex (Exo-9) associates with the catalytic subunit EXOSC10/RRP6. Exo-9 may associate with DIS3 to form the nucleolar exosome complex, or DIS3L to form the cytoplasmic exosome complex. Exo-9 is formed by a hexameric base ring consisting of the heterodimers EXOSC4-EXOSC9, EXOSC5-EXOSC8 and EXOSC6-EXOSC7, and a cap ring consisting of EXOSC1, EXOSC2 and EXOSC3. The RNA exosome complex associates with cofactors C1D/RRP47, MPHOSPH6/MPP6 and MTREX/MTR4.

The protein localises to the cytoplasm. It localises to the nucleus. The protein resides in the nucleolus. In terms of biological role, non-catalytic component of the RNA exosome complex which has 3'-&gt;5' exoribonuclease activity and participates in a multitude of cellular RNA processing and degradation events. In the nucleus, the RNA exosome complex is involved in proper maturation of stable RNA species such as rRNA, snRNA and snoRNA, in the elimination of RNA processing by-products and non-coding 'pervasive' transcripts, such as antisense RNA species and promoter-upstream transcripts (PROMPTs), and of mRNAs with processing defects, thereby limiting or excluding their export to the cytoplasm. The RNA exosome may be involved in Ig class switch recombination (CSR) and/or Ig variable region somatic hypermutation (SHM) by targeting AICDA deamination activity to transcribed dsDNA substrates. In the cytoplasm, the RNA exosome complex is involved in general mRNA turnover and specifically degrades inherently unstable mRNAs containing AU-rich elements (AREs) within their 3' untranslated regions, and in RNA surveillance pathways, preventing translation of aberrant mRNAs. It seems to be involved in degradation of histone mRNA. The catalytic inactive RNA exosome core complex of 9 subunits (Exo-9) is proposed to play a pivotal role in the binding and presentation of RNA for ribonucleolysis, and to serve as a scaffold for the association with catalytic subunits and accessory proteins or complexes. EXOSC8 binds to ARE-containing RNAs. This is Exosome complex component RRP43 (Exosc8) from Mus musculus (Mouse).